The primary structure comprises 387 residues: 3-ketoacyl-CoA thiolase (387 aa).

The active-site Acyl-thioester intermediate is the Cys-91. Residues His-343 and Cys-373 each act as proton acceptor in the active site.

Belongs to the thiolase-like superfamily. Thiolase family. As to quaternary structure, heterotetramer of two alpha chains (FadB) and two beta chains (FadA).

It is found in the cytoplasm. It carries out the reaction an acyl-CoA + acetyl-CoA = a 3-oxoacyl-CoA + CoA. It functions in the pathway lipid metabolism; fatty acid beta-oxidation. In terms of biological role, catalyzes the final step of fatty acid oxidation in which acetyl-CoA is released and the CoA ester of a fatty acid two carbons shorter is formed. This Shewanella loihica (strain ATCC BAA-1088 / PV-4) protein is 3-ketoacyl-CoA thiolase.